Reading from the N-terminus, the 678-residue chain is RAS guanyl-releasing protein 4 (678 aa).

2 stretches are compositionally biased toward basic residues: residues Met-1–Ser-10 and Gly-20–Thr-32. 2 disordered regions span residues Met-1–Cys-33 and Gly-165–Pro-185. One can recognise an N-terminal Ras-GEF domain in the interval Gly-49–Gly-175. In terms of domain architecture, Ras-GEF spans Glu-201–Arg-432. The 36-residue stretch at His-466–Ala-501 folds into the EF-hand domain. Residues Leu-540 to Cys-595 form a Phorbol-ester/DAG-type zinc finger. Disordered stretches follow at residues Arg-598–Thr-620 and Ser-651–Val-678. A compositionally biased stretch (pro residues) spans Pro-605–Pro-619.

Belongs to the RASGRP family. As to expression, expressed by mast cells and their progenitors (at protein level).

It is found in the cytoplasm. The protein resides in the cell membrane. Functionally, functions as a cation- and diacylglycerol (DAG)-regulated nucleotide exchange factor activating Ras through the exchange of bound GDP for GTP. In neutrophils, participates in a phospholipase C-activating N-formyl peptide-activated GPCR (G protein-coupled receptor) signaling pathway by promoting Ras-mediated activation of PIK3CG/PI3Kgamma to promote neutrophil functional responses. In CD117(+) dendritic cells and mast cells, participates in an lipopolysaccharide (LPS)-activated signaling pathway that stimulates the production of interferon-gamma and other pro-inflammatory cytokines by natural killer (NK) cells. May function in mast cell differentiation. Does not appear to be required for the development of B-cells, DC-cells, T-cells, or NK-cells. This Rattus norvegicus (Rat) protein is RAS guanyl-releasing protein 4 (Rasgrp4).